Reading from the N-terminus, the 460-residue chain is Histidinol dehydrogenase (460 aa).

Substrate is bound by residues S269, Q291, and H294. Zn(2+)-binding residues include Q291 and H294. Residues E358 and H359 each act as proton acceptor in the active site. Positions 359, 392, 446, and 451 each coordinate substrate. D392 serves as a coordination point for Zn(2+). H451 provides a ligand contact to Zn(2+).

The protein belongs to the histidinol dehydrogenase family. It depends on Zn(2+) as a cofactor.

It catalyses the reaction L-histidinol + 2 NAD(+) + H2O = L-histidine + 2 NADH + 3 H(+). It functions in the pathway amino-acid biosynthesis; L-histidine biosynthesis; L-histidine from 5-phospho-alpha-D-ribose 1-diphosphate: step 9/9. Catalyzes the sequential NAD-dependent oxidations of L-histidinol to L-histidinaldehyde and then to L-histidine. This chain is Histidinol dehydrogenase, found in Rhodopirellula baltica (strain DSM 10527 / NCIMB 13988 / SH1).